The chain runs to 324 residues: Thiazole synthase (324 aa).

The active-site Schiff-base intermediate with DXP is K167. Residues G228, 254-255 (AG), and 276-277 (NT) contribute to the 1-deoxy-D-xylulose 5-phosphate site.

It belongs to the ThiG family. As to quaternary structure, homotetramer. Forms heterodimers with either ThiH or ThiS.

Its subcellular location is the cytoplasm. It catalyses the reaction [ThiS sulfur-carrier protein]-C-terminal-Gly-aminoethanethioate + 2-iminoacetate + 1-deoxy-D-xylulose 5-phosphate = [ThiS sulfur-carrier protein]-C-terminal Gly-Gly + 2-[(2R,5Z)-2-carboxy-4-methylthiazol-5(2H)-ylidene]ethyl phosphate + 2 H2O + H(+). Its pathway is cofactor biosynthesis; thiamine diphosphate biosynthesis. In terms of biological role, catalyzes the rearrangement of 1-deoxy-D-xylulose 5-phosphate (DXP) to produce the thiazole phosphate moiety of thiamine. Sulfur is provided by the thiocarboxylate moiety of the carrier protein ThiS. In vitro, sulfur can be provided by H(2)S. This chain is Thiazole synthase, found in Paramagnetospirillum magneticum (strain ATCC 700264 / AMB-1) (Magnetospirillum magneticum).